The sequence spans 300 residues: B1 kinase (300 aa).

The Protein kinase domain maps to 16–282 (WVVGPLIGKG…ITMVNSLTYF (267 aa)). ATP contacts are provided by residues 22–30 (IGKGGFGSI) and lysine 45. Catalysis depends on aspartate 147, which acts as the Proton acceptor.

The protein belongs to the protein kinase superfamily. Ser/Thr protein kinase family. Poxviruses subfamily. As to quaternary structure, interacts with host JIP1; this interaction increases the amount of MAPK bound to JIP1 and subsequently increases the activity of transcription factors, such as JUN, that respond to these complexes. Interacts with protein OPG198; this interaction inhibits the repressive activity of OPG198 pseudokinase on viral replication factory formation. Mg(2+) serves as cofactor. Autophosphorylated.

The protein resides in the virion. The protein localises to the host cytoplasm. The catalysed reaction is L-seryl-[protein] + ATP = O-phospho-L-seryl-[protein] + ADP + H(+). It carries out the reaction L-threonyl-[protein] + ATP = O-phospho-L-threonyl-[protein] + ADP + H(+). Functionally, essential serine/threonine-protein kinase that plays different role in the viral life cycle. Phosphorylates the host small ribosomal protein RACK1 thereby customizing the ribosomes to a state optimal for viral mRNAs (which contain poly-A leaders) but not for host mRNAs. Facilitates viral DNA replication by inhibiting host BANF1, a cellular host defense responsive to foreign DNA. Phosphorylates host BANF1 on serine and threonine residues; this leads to BANF1 relocalization to the cytoplasm, loss of dimerization and impaired DNA binding activity. Indeed, BANF1 activity depends on its DNA-binding property which is blocked by VPK1-mediated phosphorylation. Required for viral intermediate genes expression, probably by inhibiting host BANF1. Modulates cellular responses via host JUN by two different mechanisms, either by direct phosphorylation or by modulation of upstream JIP1-MAPK complexes. Seems to participate in the accumulation/processing of late proteins and thus in virion maturation. In addition, inhibits B12 repressive activity on viral DNA replication via a phosphorylation-dependent mechanism. The protein is B1 kinase (OPG187) of Homo sapiens (Human).